The primary structure comprises 454 residues: Protoheme IX farnesyltransferase 1 (454 aa).

Residues 1–186 (MRTTGFSGLL…AYFELTKPRL (186 aa)) form a unknown region. 4 helical membrane passes run 9 to 29 (LLSA…TAAL), 59 to 79 (GVAA…WSET), 87 to 107 (LALA…VATG), and 113 to 133 (LHLF…AWHL). Residues 137–164 (TGSDDAPESPPELAPPVDEEPAATEQPA) form a disordered region. 9 consecutive transmembrane segments (helical) span residues 186-206 (LMWL…TPTV), 209-229 (VVFT…FNHV), 251-271 (VPVA…LWAF), 276-296 (LLAA…YTLI), 300-320 (NTVQ…LIGY), 321-341 (AAVT…IFLW), 377-397 (HIVF…AVTD), 398-418 (LGWL…WAVV), and 433-453 (FHAS…DSLA). The protoheme IX prenyltransferase stretch occupies residues 187 to 451 (MWLLCLVAGA…LVLVAILIDS (265 aa)).

In the C-terminal section; belongs to the UbiA prenyltransferase family. Protoheme IX farnesyltransferase subfamily.

Its subcellular location is the cell membrane. It catalyses the reaction heme b + (2E,6E)-farnesyl diphosphate + H2O = Fe(II)-heme o + diphosphate. It functions in the pathway porphyrin-containing compound metabolism; heme O biosynthesis; heme O from protoheme: step 1/1. Functionally, converts heme B (protoheme IX) to heme O by substitution of the vinyl group on carbon 2 of heme B porphyrin ring with a hydroxyethyl farnesyl side group. This Natronomonas pharaonis (strain ATCC 35678 / DSM 2160 / CIP 103997 / JCM 8858 / NBRC 14720 / NCIMB 2260 / Gabara) (Halobacterium pharaonis) protein is Protoheme IX farnesyltransferase 1 (ctaB1).